A 526-amino-acid chain; its full sequence is Cytochrome P450 52A5 (526 aa).

The chain crosses the membrane as a helical span at residues 18-38; that stretch reads WYVIVPLAIIIYKVFDYFYVL. Heme is bound at residue Cys473.

Belongs to the cytochrome P450 family. Heme is required as a cofactor.

It localises to the membrane. Functionally, together with an NADPH cytochrome P450 the enzyme system catalyzes the terminal hydroxylation as the first step in the assimilation of alkanes and fatty acids. The polypeptide is Cytochrome P450 52A5 (CYP52A5) (Candida maltosa (Yeast)).